The primary structure comprises 235 residues: 7-carboxy-7-deazaguanine synthase (235 aa).

Residues 25 to 27 (IQG) and R40 contribute to the substrate site. The region spanning 31 to 235 (FTGTYSVFVR…PRLHLLVQLP (205 aa)) is the Radical SAM core domain. Residues C44, C48, and C51 each contribute to the [4Fe-4S] cluster site. Residue T53 participates in Mg(2+) binding. Residue T85 coordinates substrate. S-adenosyl-L-methionine is bound by residues G87 and 135 to 137 (SPK). P235 contacts substrate.

It belongs to the radical SAM superfamily. 7-carboxy-7-deazaguanine synthase family. In terms of assembly, homodimer. It depends on [4Fe-4S] cluster as a cofactor. S-adenosyl-L-methionine is required as a cofactor. Requires Mg(2+) as cofactor.

The catalysed reaction is 6-carboxy-5,6,7,8-tetrahydropterin + H(+) = 7-carboxy-7-deazaguanine + NH4(+). It participates in purine metabolism; 7-cyano-7-deazaguanine biosynthesis. Catalyzes the complex heterocyclic radical-mediated conversion of 6-carboxy-5,6,7,8-tetrahydropterin (CPH4) to 7-carboxy-7-deazaguanine (CDG), a step common to the biosynthetic pathways of all 7-deazapurine-containing compounds. This is 7-carboxy-7-deazaguanine synthase from Hyperthermus butylicus (strain DSM 5456 / JCM 9403 / PLM1-5).